A 318-amino-acid polypeptide reads, in one-letter code: Bis(5'-nucleosyl)-tetraphosphatase, symmetrical (318 aa).

The segment at 269 to 318 is disordered; that stretch reads PGREVTGPAPVARAPRRPRERLGRQRSRGNRGNAGNTAVPAKPQVDTPQD. Residues 282–297 are compositionally biased toward basic residues; the sequence is APRRPRERLGRQRSRG.

Belongs to the Ap4A hydrolase family.

The catalysed reaction is P(1),P(4)-bis(5'-adenosyl) tetraphosphate + H2O = 2 ADP + 2 H(+). Functionally, hydrolyzes diadenosine 5',5'''-P1,P4-tetraphosphate to yield ADP. The sequence is that of Bis(5'-nucleosyl)-tetraphosphatase, symmetrical from Xanthomonas oryzae pv. oryzae (strain KACC10331 / KXO85).